The primary structure comprises 173 residues: Phosphopantetheine adenylyltransferase (173 aa).

Ser-9 is a substrate binding site. Residues 9 to 10 (SF) and His-17 each bind ATP. Positions 41, 73, and 87 each coordinate substrate. Residues 88–90 (GLR), Glu-98, and 123–129 (YQHLSSS) contribute to the ATP site.

This sequence belongs to the bacterial CoaD family. In terms of assembly, homohexamer. Mg(2+) serves as cofactor.

The protein resides in the cytoplasm. The catalysed reaction is (R)-4'-phosphopantetheine + ATP + H(+) = 3'-dephospho-CoA + diphosphate. The protein operates within cofactor biosynthesis; coenzyme A biosynthesis; CoA from (R)-pantothenate: step 4/5. In terms of biological role, reversibly transfers an adenylyl group from ATP to 4'-phosphopantetheine, yielding dephospho-CoA (dPCoA) and pyrophosphate. The polypeptide is Phosphopantetheine adenylyltransferase (Limosilactobacillus reuteri (strain DSM 20016) (Lactobacillus reuteri)).